Here is a 370-residue protein sequence, read N- to C-terminus: Aspartate-semialdehyde dehydrogenase (370 aa).

Residues 10–13 (RGMV), 37–38 (TS), and Q73 each bind NADP(+). Phosphate is bound at residue R102. C135 acts as the Acyl-thioester intermediate in catalysis. Q162 lines the substrate pocket. Residues 165–166 (SG) and P193 contribute to the NADP(+) site. Residue E241 coordinates substrate. K244 lines the phosphate pocket. R268 contributes to the substrate binding site. The Proton acceptor role is filled by H275. Q351 contributes to the NADP(+) binding site.

The protein belongs to the aspartate-semialdehyde dehydrogenase family. Homodimer.

It catalyses the reaction L-aspartate 4-semialdehyde + phosphate + NADP(+) = 4-phospho-L-aspartate + NADPH + H(+). It participates in amino-acid biosynthesis; L-lysine biosynthesis via DAP pathway; (S)-tetrahydrodipicolinate from L-aspartate: step 2/4. Its pathway is amino-acid biosynthesis; L-methionine biosynthesis via de novo pathway; L-homoserine from L-aspartate: step 2/3. The protein operates within amino-acid biosynthesis; L-threonine biosynthesis; L-threonine from L-aspartate: step 2/5. Its function is as follows. Catalyzes the NADPH-dependent formation of L-aspartate-semialdehyde (L-ASA) by the reductive dephosphorylation of L-aspartyl-4-phosphate. This chain is Aspartate-semialdehyde dehydrogenase (asd), found in Pseudomonas aeruginosa (strain ATCC 15692 / DSM 22644 / CIP 104116 / JCM 14847 / LMG 12228 / 1C / PRS 101 / PAO1).